Consider the following 317-residue polypeptide: Acetyl-coenzyme A carboxylase carboxyl transferase subunit alpha (317 aa).

Positions 40 to 293 (LEGRVRDAMV…EAVIGDALKE (254 aa)) constitute a CoA carboxyltransferase C-terminal domain.

This sequence belongs to the AccA family. As to quaternary structure, acetyl-CoA carboxylase is a heterohexamer composed of biotin carboxyl carrier protein (AccB), biotin carboxylase (AccC) and two subunits each of ACCase subunit alpha (AccA) and ACCase subunit beta (AccD).

It is found in the cytoplasm. The enzyme catalyses N(6)-carboxybiotinyl-L-lysyl-[protein] + acetyl-CoA = N(6)-biotinyl-L-lysyl-[protein] + malonyl-CoA. It functions in the pathway lipid metabolism; malonyl-CoA biosynthesis; malonyl-CoA from acetyl-CoA: step 1/1. In terms of biological role, component of the acetyl coenzyme A carboxylase (ACC) complex. First, biotin carboxylase catalyzes the carboxylation of biotin on its carrier protein (BCCP) and then the CO(2) group is transferred by the carboxyltransferase to acetyl-CoA to form malonyl-CoA. This is Acetyl-coenzyme A carboxylase carboxyl transferase subunit alpha from Sinorhizobium medicae (strain WSM419) (Ensifer medicae).